A 142-amino-acid polypeptide reads, in one-letter code: Holo-[acyl-carrier-protein] synthase (142 aa).

2 residues coordinate Mg(2+): Asp-8 and Glu-57.

It belongs to the P-Pant transferase superfamily. AcpS family. It depends on Mg(2+) as a cofactor.

The protein resides in the cytoplasm. It catalyses the reaction apo-[ACP] + CoA = holo-[ACP] + adenosine 3',5'-bisphosphate + H(+). Transfers the 4'-phosphopantetheine moiety from coenzyme A to a Ser of acyl-carrier-protein. In Ruegeria sp. (strain TM1040) (Silicibacter sp.), this protein is Holo-[acyl-carrier-protein] synthase.